We begin with the raw amino-acid sequence, 421 residues long: UDP-N-acetylglucosamine 1-carboxyvinyltransferase (421 aa).

Position 22–23 (22–23) interacts with phosphoenolpyruvate; the sequence is KN. Arginine 92 serves as a coordination point for UDP-N-acetyl-alpha-D-glucosamine. Residue cysteine 116 is the Proton donor of the active site. Cysteine 116 bears the 2-(S-cysteinyl)pyruvic acid O-phosphothioketal mark. Aspartate 306 and valine 328 together coordinate UDP-N-acetyl-alpha-D-glucosamine.

The protein belongs to the EPSP synthase family. MurA subfamily.

It is found in the cytoplasm. The enzyme catalyses phosphoenolpyruvate + UDP-N-acetyl-alpha-D-glucosamine = UDP-N-acetyl-3-O-(1-carboxyvinyl)-alpha-D-glucosamine + phosphate. Its pathway is cell wall biogenesis; peptidoglycan biosynthesis. Cell wall formation. Adds enolpyruvyl to UDP-N-acetylglucosamine. The polypeptide is UDP-N-acetylglucosamine 1-carboxyvinyltransferase (Thermotoga maritima (strain ATCC 43589 / DSM 3109 / JCM 10099 / NBRC 100826 / MSB8)).